Here is an 803-residue protein sequence, read N- to C-terminus: Translation initiation factor IF-2 (803 aa).

A compositionally biased stretch (basic and acidic residues) spans 65–75; the sequence is PDKVEEKKEHT. Positions 65 to 186 are disordered; sequence PDKVEEKKEH…PKSRKSKTLK (122 aa). Residues 175–185 are compositionally biased toward basic residues; that stretch reads NKPKSRKSKTL. The 169-residue stretch at 300 to 468 folds into the tr-type G domain; it reads IRPPVVTIMG…ILLTADAALE (169 aa). Positions 309 to 316 are G1; sequence GHVDHGKT. 309–316 contacts GTP; the sequence is GHVDHGKT. The tract at residues 334–338 is G2; that stretch reads GITQH. Positions 355–358 are G3; it reads DTPG. GTP is bound by residues 355-359 and 409-412; these read DTPGH and NKID. Positions 409–412 are G4; the sequence is NKID. Residues 445 to 447 form a G5 region; it reads SAK.

The protein belongs to the TRAFAC class translation factor GTPase superfamily. Classic translation factor GTPase family. IF-2 subfamily.

The protein resides in the cytoplasm. Functionally, one of the essential components for the initiation of protein synthesis. Protects formylmethionyl-tRNA from spontaneous hydrolysis and promotes its binding to the 30S ribosomal subunits. Also involved in the hydrolysis of GTP during the formation of the 70S ribosomal complex. This is Translation initiation factor IF-2 from Tropheryma whipplei (strain Twist) (Whipple's bacillus).